A 425-amino-acid chain; its full sequence is Aspartic protease 2 (425 aa).

A signal peptide spans 1-16 (MRSILVLVALIGCIAA). The Peptidase A1 domain maps to 72–421 (YLGEITIGTP…DIEKKRIGFA (350 aa)). Residue Asp90 is part of the active site. An intrachain disulfide couples Cys103 to Cys145. Asn163, Asn197, and Asn304 each carry an N-linked (GlcNAc...) asparagine glycan. Asp316 is an active-site residue. A disulfide bond links Cys351 and Cys382. Residues Asn354 and Asn365 are each glycosylated (N-linked (GlcNAc...) asparagine).

It belongs to the peptidase A1 family. In terms of processing, cleaved into a mature form. Expressed in intestine, amphidal glands and excretory gland (at protein level).

The protein resides in the secreted. Its activity is regulated as follows. Inhibited by pepstatin A. Aspartic protease which cleaves several human serum proteins including hemoglobin, fibrinogen and albumin. Appears to cleave preferentially between P1 (Ala, Leu, Val, Phe and Gly) and P1' (Ala and Leu) residues. This Necator americanus (Human hookworm) protein is Aspartic protease 2.